Reading from the N-terminus, the 141-residue chain is Hemoglobin subunit alpha (141 aa).

The region spanning 1-141 (VLSSKDKANV…VSTVLTSKYR (141 aa)) is the Globin domain. Ser-3 is subject to Phosphoserine. N6-succinyllysine occurs at positions 7 and 11. At Lys-16 the chain carries N6-acetyllysine; alternate. Position 16 is an N6-succinyllysine; alternate (Lys-16). Tyr-24 bears the Phosphotyrosine mark. Lys-40 carries the post-translational modification N6-succinyllysine. Phosphoserine is present on Ser-49. His-58 serves as a coordination point for O2. His-87 contacts heme b. Ser-102 is modified (phosphoserine). Thr-108 bears the Phosphothreonine mark. A Phosphoserine modification is found at Ser-124. Residues Thr-134 and Thr-137 each carry the phosphothreonine modification. Residue Ser-138 is modified to Phosphoserine.

Belongs to the globin family. In terms of assembly, heterotetramer of two alpha chains and two beta chains. As to expression, red blood cells.

Functionally, involved in oxygen transport from the lung to the various peripheral tissues. Hemopressin acts as an antagonist peptide of the cannabinoid receptor CNR1. Hemopressin-binding efficiently blocks cannabinoid receptor CNR1 and subsequent signaling. In Lama vicugna (Vicugna), this protein is Hemoglobin subunit alpha (HBA).